We begin with the raw amino-acid sequence, 722 residues long: Homeobox-leucine zipper protein HDG11 (722 aa).

Over residues 1–19 (MSFVVGVGGSGSGSGGDGG) the composition is skewed to gly residues. The tract at residues 1–42 (MSFVVGVGGSGSGSGGDGGGSHHHDGSETDRKKKRYHRHTAQ) is disordered. A compositionally biased stretch (basic and acidic residues) spans 20–31 (GSHHHDGSETDR). The homeobox DNA-binding region spans 32–91 (KKKRYHRHTAQQIQRLESSFKECPHPDEKQRNQLSRELGLAPRQIKFWFQNRRTQLKAQH). Residues 81-161 (QNRRTQLKAQ…LERMSTIASK (81 aa)) are a coiled coil. The START domain maps to 227-460 (SDMDKPIMTG…LQRMCERFAS (234 aa)).

It belongs to the HD-ZIP homeobox family. Class IV subfamily. Interacts with BBM. Expressed in apical meristems and young epidermal tissue including trichomes and stipules. Expressed in lateral root tips, the L1 layer of apical inflorescence meristems and early flower primordia, carpel and petal epidermis, stigma papillae, ovule primordia, nucellus and embryo.

The protein localises to the nucleus. Transcription factor which acts as a positive regulator of drought stress tolerance. Can transactivate CIPK3, NCED3 and ERECTA. Transactivates several cell-wall-loosening protein genes by directly binding to HD motifs in their promoters. These target genes play important roles in coordinating cell-wall extensibility with root development and growth. Transactivates CYP74A/AOS, AOC3, OPR3 and 4CLL5/OPCL1 genes by directly binding to HD motifs in their promoters. These target genes are involved in jasmonate (JA) biosynthesis, and JA signaling affects root architecture by activating auxin signaling, which promotes lateral root formation. Acts as a negative regulator of trichome branching. Required for the establishment of giant cell identity on the abaxial side of sepals. Seems to promote cell differentiation. May regulate cell differentiation and proliferation during root and shoot meristem development. This Arabidopsis thaliana (Mouse-ear cress) protein is Homeobox-leucine zipper protein HDG11.